The primary structure comprises 432 residues: Keratin, type I cytoskeletal 17 (432 aa).

The interval 1-24 is disordered; sequence MTTTIRQFTSSSSIKGSSGLGGGS. The interval 1–83 is head; that stretch reads MTTTIRQFTS…GGVDGLLAGG (83 aa). Phosphoserine is present on residues Ser-12 and Ser-13. Residue Lys-15 forms a Glycyl lysine isopeptide (Lys-Gly) (interchain with G-Cter in SUMO1); alternate linkage. Lys-15 participates in a covalent cross-link: Glycyl lysine isopeptide (Lys-Gly) (interchain with G-Cter in SUMO2); alternate. Phosphoserine occurs at positions 25, 32, and 39. Ser-44 is modified (phosphoserine; by RPS6KA1). Positions 84–120 are coil 1A; that stretch reads EKATMQNLNDRLASYLDKVRALEEANTELEVKIRDWY. An IF rod domain is found at 84-395; it reads EKATMQNLND…RLLEGEDAHL (312 aa). Thr-110 carries the phosphothreonine modification. A linker 1 region spans residues 121–138; that stretch reads QRQAPGPARDYSQYYRTI. A coil 1B region spans residues 139–230; that stretch reads EELQNKILTA…NHEEEMNALR (92 aa). A linker 12 region spans residues 231 to 250; the sequence is GQVGGEINVEMDAAPGVDLS. The interval 251–392 is coil 2; it reads RILNEMRDQY…TYRRLLEGED (142 aa). A Glycyl lysine isopeptide (Lys-Gly) (interchain with G-Cter in SUMO2) cross-link involves residue Lys-278. Phosphothreonine is present on Thr-279. Ser-323 bears the Phosphoserine mark. The tract at residues 393-432 is tail; that stretch reads AHLTQYKKEPVTTRQVRTIVEEVQDGKVISSREQVHQTTR. Glycyl lysine isopeptide (Lys-Gly) (interchain with G-Cter in SUMO1); alternate cross-links involve residues Lys-399, Lys-400, and Lys-419. Glycyl lysine isopeptide (Lys-Gly) (interchain with G-Cter in SUMO2); alternate cross-links involve residues Lys-399, Lys-400, and Lys-419.

Belongs to the intermediate filament family. Heterodimer of a type I and a type II keratin. KRT17 associates with KRT6 isomers (KRT6A or KRT6B). Interacts with TRADD and SFN. Phosphorylation at Ser-44 occurs in a growth- and stress-dependent fashion in skin keratinocytes, it has no effect on filament organization.

The protein resides in the cytoplasm. Type I keratin involved in the formation and maintenance of various skin appendages, specifically in determining shape and orientation of hair. Required for the correct growth of hair follicles, in particular for the persistence of the anagen (growth) state. Modulates the function of TNF-alpha in the specific context of hair cycling. Regulates protein synthesis and epithelial cell growth through binding to the adapter protein SFN and by stimulating Akt/mTOR pathway. Involved in tissue repair. May be a marker of basal cell differentiation in complex epithelia and therefore indicative of a certain type of epithelial 'stem cells'. Acts as a promoter of epithelial proliferation by acting a regulator of immune response in skin: promotes Th1/Th17-dominated immune environment contributing to the development of basaloid skin tumors. May act as an autoantigen in the immunopathogenesis of psoriasis, with certain peptide regions being a major target for autoreactive T-cells and hence causing their proliferation. The polypeptide is Keratin, type I cytoskeletal 17 (Pan troglodytes (Chimpanzee)).